A 196-amino-acid chain; its full sequence is uncharacterized protein (196 aa).

To E.coli YjaG.

This is an uncharacterized protein from Haemophilus influenzae (strain ATCC 51907 / DSM 11121 / KW20 / Rd).